A 95-amino-acid chain; its full sequence is Acylphosphatase (95 aa).

The region spanning 7 to 95 is the Acylphosphatase-like domain; sequence RLTAWVLGTV…PKGEVGFRTR (89 aa). Catalysis depends on residues arginine 22 and asparagine 40.

Belongs to the acylphosphatase family.

It catalyses the reaction an acyl phosphate + H2O = a carboxylate + phosphate + H(+). The polypeptide is Acylphosphatase (acyP) (Corynebacterium diphtheriae (strain ATCC 700971 / NCTC 13129 / Biotype gravis)).